Reading from the N-terminus, the 428-residue chain is RF4 protein (428 aa).

Asn-8, Asn-205, and Asn-344 each carry an N-linked (GlcNAc...) asparagine glycan.

Not known. The polypeptide is RF4 protein (RF4) (Kluyveromyces lactis (strain ATCC 8585 / CBS 2359 / DSM 70799 / NBRC 1267 / NRRL Y-1140 / WM37) (Yeast)).